The following is a 94-amino-acid chain: Integration host factor subunit beta (94 aa).

The protein belongs to the bacterial histone-like protein family. As to quaternary structure, heterodimer of an alpha and a beta chain.

Its function is as follows. This protein is one of the two subunits of integration host factor, a specific DNA-binding protein that functions in genetic recombination as well as in transcriptional and translational control. In Edwardsiella ictaluri (strain 93-146), this protein is Integration host factor subunit beta.